A 153-amino-acid polypeptide reads, in one-letter code: Insulin-like growth factor 1 (153 aa).

Residues 49–77 form a b region; the sequence is GPETLCGAELVDALQFVCGPRGFYFNKPT. Disulfide bonds link C54-C96, C66-C109, and C95-C100. Residues 78 to 89 form a c region; it reads GYGSSIRRAPQT. Residues 90-110 form an a region; it reads GIVDECCFRSCDLRRLEMYCA. The segment at 111 to 118 is d; that stretch reads PLKPTKSA. A propeptide spans 119–153 (e peptide); the sequence is RSIRAQRHTDMPKTQKEVHLKNTSRGSAGNKTYRM. Residues 119–153 are disordered; that stretch reads RSIRAQRHTDMPKTQKEVHLKNTSRGSAGNKTYRM. Positions 125-138 are enriched in basic and acidic residues; that stretch reads RHTDMPKTQKEVHL. Residues 139 to 153 are compositionally biased toward polar residues; the sequence is KNTSRGSAGNKTYRM.

This sequence belongs to the insulin family. As to quaternary structure, forms a ternary complex with IGFR1 and ITGAV:ITGB3. Forms a ternary complex with IGFR1 and ITGA6:ITGB4. Forms a ternary complex with IGFBP3 and ALS.

It is found in the secreted. Its function is as follows. The insulin-like growth factors, isolated from plasma, are structurally and functionally related to insulin but have a much higher growth-promoting activity. May be a physiological regulator of [1-14C]-2-deoxy-D-glucose (2DG) transport and glycogen synthesis in osteoblasts. Stimulates glucose transport in bone-derived osteoblastic (PyMS) cells and is effective at much lower concentrations than insulin, not only regarding glycogen and DNA synthesis but also with regard to enhancing glucose uptake. May play a role in synapse maturation. Ca(2+)-dependent exocytosis of IGF1 is required for sensory perception of smell in the olfactory bulb. Acts as a ligand for IGF1R. Binds to the alpha subunit of IGF1R, leading to the activation of the intrinsic tyrosine kinase activity which autophosphorylates tyrosine residues in the beta subunit thus initiating a cascade of down-stream signaling events leading to activation of the PI3K-AKT/PKB and the Ras-MAPK pathways. Binds to integrins ITGAV:ITGB3 and ITGA6:ITGB4. Its binding to integrins and subsequent ternary complex formation with integrins and IGFR1 are essential for IGF1 signaling. Induces the phosphorylation and activation of IGFR1, MAPK3/ERK1, MAPK1/ERK2 and AKT1. As part of the MAPK/ERK signaling pathway, acts as a negative regulator of apoptosis in cardiomyocytes via promotion of STUB1/CHIP-mediated ubiquitination and degradation of ICER-type isoforms of CREM. In Rattus norvegicus (Rat), this protein is Insulin-like growth factor 1.